Here is a 430-residue protein sequence, read N- to C-terminus: Bifunctional protein GlmU (430 aa).

Positions 1–223 are pyrophosphorylase; it reads MSISVVILAA…EEEFKGVNSK (223 aa). UDP-N-acetyl-alpha-D-glucosamine is bound by residues 8–11, K22, and 81–82; these read LAAG and GT. D102 lines the Mg(2+) pocket. UDP-N-acetyl-alpha-D-glucosamine contacts are provided by G135, E149, N164, and N221. Residue N221 coordinates Mg(2+). Positions 224-244 are linker; it reads LDLARAEEIMQRRIKEALMMA. Positions 245–430 are N-acetyltransferase; it reads GVTMCLPETI…NFFYKFFGDK (186 aa). Positions 308 and 325 each coordinate UDP-N-acetyl-alpha-D-glucosamine. Residue H336 is the Proton acceptor of the active site. UDP-N-acetyl-alpha-D-glucosamine contacts are provided by Y339 and N350. Acetyl-CoA-binding positions include A353, 359–360, S378, A396, and R413; that span reads NY.

The protein in the N-terminal section; belongs to the N-acetylglucosamine-1-phosphate uridyltransferase family. In the C-terminal section; belongs to the transferase hexapeptide repeat family. Homotrimer. The cofactor is Mg(2+).

The protein localises to the cytoplasm. It catalyses the reaction alpha-D-glucosamine 1-phosphate + acetyl-CoA = N-acetyl-alpha-D-glucosamine 1-phosphate + CoA + H(+). The catalysed reaction is N-acetyl-alpha-D-glucosamine 1-phosphate + UTP + H(+) = UDP-N-acetyl-alpha-D-glucosamine + diphosphate. Its pathway is nucleotide-sugar biosynthesis; UDP-N-acetyl-alpha-D-glucosamine biosynthesis; N-acetyl-alpha-D-glucosamine 1-phosphate from alpha-D-glucosamine 6-phosphate (route II): step 2/2. It participates in nucleotide-sugar biosynthesis; UDP-N-acetyl-alpha-D-glucosamine biosynthesis; UDP-N-acetyl-alpha-D-glucosamine from N-acetyl-alpha-D-glucosamine 1-phosphate: step 1/1. The protein operates within bacterial outer membrane biogenesis; LPS lipid A biosynthesis. Functionally, catalyzes the last two sequential reactions in the de novo biosynthetic pathway for UDP-N-acetylglucosamine (UDP-GlcNAc). The C-terminal domain catalyzes the transfer of acetyl group from acetyl coenzyme A to glucosamine-1-phosphate (GlcN-1-P) to produce N-acetylglucosamine-1-phosphate (GlcNAc-1-P), which is converted into UDP-GlcNAc by the transfer of uridine 5-monophosphate (from uridine 5-triphosphate), a reaction catalyzed by the N-terminal domain. The sequence is that of Bifunctional protein GlmU from Sulfurovum sp. (strain NBC37-1).